A 97-amino-acid polypeptide reads, in one-letter code: Co-chaperonin GroES (97 aa).

The protein belongs to the GroES chaperonin family. Heptamer of 7 subunits arranged in a ring. Interacts with the chaperonin GroEL.

It is found in the cytoplasm. Together with the chaperonin GroEL, plays an essential role in assisting protein folding. The GroEL-GroES system forms a nano-cage that allows encapsulation of the non-native substrate proteins and provides a physical environment optimized to promote and accelerate protein folding. GroES binds to the apical surface of the GroEL ring, thereby capping the opening of the GroEL channel. This chain is Co-chaperonin GroES, found in Buchnera aphidicola subsp. Baizongia pistaciae (strain Bp).